A 560-amino-acid polypeptide reads, in one-letter code: Bifunctional NAD(P)H-hydrate repair enzyme (560 aa).

An NAD(P)H-hydrate epimerase region spans residues 1–241 (MLSRLSERCT…WMTAPERMRV (241 aa)). The YjeF N-terminal domain occupies 29 to 235 (LRDAEPAAAA…SLGLEDWMTA (207 aa)). The NADPHX 1; for epimerase activity stretch occupies residues 77 to 81 (NNGGD). K(+) is bound by residues asparagine 78 and aspartate 145. The NADPHX 1; for epimerase activity stretch occupies residues 149 to 155 (GTGICGP). 2 residues coordinate (6S)-NADPHX: tyrosine 160 and aspartate 178. Serine 181 contacts K(+). Residues 249–547 (LDDVYEYFGI…HRVPLIVNAS (299 aa)) form the YjeF C-terminal domain. Residues 249 to 560 (LDDVYEYFGI…PASRQRPSGQ (312 aa)) are ADP-dependent (S)-NAD(P)H-hydrate dehydratase. A (6S)-NADPHX-binding site is contributed by glycine 351. The segment at 417–423 (HPGEAAR) is NADPHX 2; for dehydratase activity. ADP is bound by residues 454–458 (KGPGT) and 475–484 (NAGMASGGMG). Residue aspartate 485 participates in (6S)-NADPHX binding.

This sequence in the N-terminal section; belongs to the NnrE/AIBP family. In the C-terminal section; belongs to the NnrD/CARKD family. It depends on K(+) as a cofactor.

The catalysed reaction is (6S)-NADHX + ADP = AMP + phosphate + NADH + H(+). It carries out the reaction (6S)-NADPHX + ADP = AMP + phosphate + NADPH + H(+). It catalyses the reaction (6R)-NADHX = (6S)-NADHX. The enzyme catalyses (6R)-NADPHX = (6S)-NADPHX. Functionally, bifunctional enzyme that catalyzes the epimerization of the S- and R-forms of NAD(P)HX and the dehydration of the S-form of NAD(P)HX at the expense of ADP, which is converted to AMP. This allows the repair of both epimers of NAD(P)HX, a damaged form of NAD(P)H that is a result of enzymatic or heat-dependent hydration. This chain is Bifunctional NAD(P)H-hydrate repair enzyme, found in Leishmania major.